The following is a 157-amino-acid chain: Ribosomal RNA large subunit methyltransferase H (157 aa).

Residues leucine 73, glycine 105, and 124-129 each bind S-adenosyl-L-methionine; that span reads LSQMTF.

Belongs to the RNA methyltransferase RlmH family. Homodimer.

It is found in the cytoplasm. It catalyses the reaction pseudouridine(1915) in 23S rRNA + S-adenosyl-L-methionine = N(3)-methylpseudouridine(1915) in 23S rRNA + S-adenosyl-L-homocysteine + H(+). In terms of biological role, specifically methylates the pseudouridine at position 1915 (m3Psi1915) in 23S rRNA. The sequence is that of Ribosomal RNA large subunit methyltransferase H from Flavobacterium psychrophilum (strain ATCC 49511 / DSM 21280 / CIP 103535 / JIP02/86).